The chain runs to 362 residues: GTP 3',8-cyclase (362 aa).

One can recognise a Radical SAM core domain in the interval serine 8 to aspartate 228. Arginine 17 provides a ligand contact to GTP. Positions 24 and 28 each coordinate [4Fe-4S] cluster. Tyrosine 30 provides a ligand contact to S-adenosyl-L-methionine. Residue cysteine 31 participates in [4Fe-4S] cluster binding. Arginine 71 is a binding site for GTP. Glycine 75 contributes to the S-adenosyl-L-methionine binding site. Threonine 102 is a binding site for GTP. Serine 126 serves as a coordination point for S-adenosyl-L-methionine. Lysine 164 lines the GTP pocket. S-adenosyl-L-methionine is bound at residue methionine 198. Residues cysteine 262 and cysteine 265 each contribute to the [4Fe-4S] cluster site. A GTP-binding site is contributed by arginine 267 to arginine 269. Residue cysteine 279 participates in [4Fe-4S] cluster binding. A disordered region spans residues alanine 325 to glycine 362.

The protein belongs to the radical SAM superfamily. MoaA family. In terms of assembly, monomer and homodimer. [4Fe-4S] cluster serves as cofactor.

The enzyme catalyses GTP + AH2 + S-adenosyl-L-methionine = (8S)-3',8-cyclo-7,8-dihydroguanosine 5'-triphosphate + 5'-deoxyadenosine + L-methionine + A + H(+). The protein operates within cofactor biosynthesis; molybdopterin biosynthesis. Its function is as follows. Catalyzes the cyclization of GTP to (8S)-3',8-cyclo-7,8-dihydroguanosine 5'-triphosphate. This chain is GTP 3',8-cyclase, found in Acidothermus cellulolyticus (strain ATCC 43068 / DSM 8971 / 11B).